Here is a 504-residue protein sequence, read N- to C-terminus: Deoxyguanosinetriphosphate triphosphohydrolase (504 aa).

Positions 66-273 constitute an HD domain; sequence RLTHSLEVQQ…MEAADDISYC (208 aa).

It belongs to the dGTPase family. Type 1 subfamily. In terms of assembly, homotetramer. It depends on Mg(2+) as a cofactor.

It catalyses the reaction dGTP + H2O = 2'-deoxyguanosine + triphosphate + H(+). In terms of biological role, dGTPase preferentially hydrolyzes dGTP over the other canonical NTPs. The polypeptide is Deoxyguanosinetriphosphate triphosphohydrolase (Klebsiella pneumoniae subsp. pneumoniae (strain ATCC 700721 / MGH 78578)).